Reading from the N-terminus, the 1132-residue chain is Tyrosine-protein kinase JAK2 (1132 aa).

Residues 1–239 (MGMACLTMTE…RYRFRRFIQQ (239 aa)) form an interaction with cytokine/interferon/growth hormone receptors region. The 344-residue stretch at 37-380 (PVLQVYLYHS…GYYRLTADAH (344 aa)) folds into the FERM domain. The residue at position 119 (Y119) is a Phosphotyrosine; by autocatalysis. Residues Y372 and Y373 each carry the phosphotyrosine modification. The SH2; atypical domain occupies 401–482 (HGPISMDFAI…NLKDLLNCYQ (82 aa)). S523 is subject to Phosphoserine. The Protein kinase 1 domain occupies 545–809 (LIFNESLGQG…AVIRDLNSLF (265 aa)). Phosphotyrosine occurs at positions 570 and 813. The Protein kinase 2 domain occupies 849–1124 (LKFLQQLGKG…SFRDLSLRVD (276 aa)). 855–863 (LGKGNFGSV) provides a ligand contact to ATP. A Phosphotyrosine; by autocatalysis modification is found at Y868. K882 is a binding site for ATP. Y966 and Y972 each carry phosphotyrosine; by autocatalysis. The active-site Proton acceptor is the D976. Y1007 and Y1008 each carry phosphotyrosine; by autocatalysis.

It belongs to the protein kinase superfamily. Tyr protein kinase family. JAK subfamily. As to quaternary structure, interacts with IL23R, SKB1 and STAM2. Interacts with EPOR. Interacts with LYN. Interacts with SIRPA. Interacts with SH2B1. Interacts with TEC. Interacts with IFNGR2 (via intracellular domain). Interacts with LEPR (Isoform B). Interacts with HSP90AB1; promotes functional activation in a heat shock-dependent manner. Interacts with STRA6. Interacts with ASB2; the interaction targets JAK2 for Notch-induced proteasomal degradation. Interacts with MPL/TPOR. Mg(2+) is required as a cofactor. In terms of processing, autophosphorylated, leading to regulate its activity. Leptin promotes phosphorylation on tyrosine residues, including phosphorylation on Tyr-813. Autophosphorylation on Tyr-119 in response to EPO down-regulates its kinase activity. Autophosphorylation on Tyr-868, Tyr-966 and Tyr-972 in response to growth hormone (GH) are required for maximal kinase activity. Also phosphorylated by TEC. Phosphorylated on tyrosine residues in response to interferon gamma signaling. Phosphorylated on tyrosine residues in response to a signaling cascade that is activated by increased cellular retinol. Post-translationally, undergoes Notch-induced ubiquitination and subsequent proteasomal degradation which is mediated by ASB1 or ASB2, the substrate-recognition components of probable ECS E3 ubiquitin-protein ligase complexes. Ubiquitously expressed throughout most tissues.

The protein localises to the endomembrane system. Its subcellular location is the cytoplasm. It localises to the nucleus. It carries out the reaction L-tyrosyl-[protein] + ATP = O-phospho-L-tyrosyl-[protein] + ADP + H(+). Regulated by autophosphorylation, can both activate or decrease activity. Heme regulates its activity by enhancing the phosphorylation on Tyr-1007 and Tyr-1008. Functionally, non-receptor tyrosine kinase involved in various processes such as cell growth, development, differentiation or histone modifications. Mediates essential signaling events in both innate and adaptive immunity. In the cytoplasm, plays a pivotal role in signal transduction via its association with type I receptors such as growth hormone (GHR), prolactin (PRLR), leptin (LEPR), erythropoietin (EPOR), thrombopoietin receptor (MPL/TPOR); or type II receptors including IFN-alpha, IFN-beta, IFN-gamma and multiple interleukins. Following ligand-binding to cell surface receptors, phosphorylates specific tyrosine residues on the cytoplasmic tails of the receptor, creating docking sites for STATs proteins. Subsequently, phosphorylates the STATs proteins once they are recruited to the receptor. Phosphorylated STATs then form homodimer or heterodimers and translocate to the nucleus to activate gene transcription. For example, cell stimulation with erythropoietin (EPO) during erythropoiesis leads to JAK2 autophosphorylation, activation, and its association with erythropoietin receptor (EPOR) that becomes phosphorylated in its cytoplasmic domain. Then, STAT5 (STAT5A or STAT5B) is recruited, phosphorylated and activated by JAK2. Once activated, dimerized STAT5 translocates into the nucleus and promotes the transcription of several essential genes involved in the modulation of erythropoiesis. Part of a signaling cascade that is activated by increased cellular retinol and that leads to the activation of STAT5 (STAT5A or STAT5B). In addition, JAK2 mediates angiotensin-2-induced ARHGEF1 phosphorylation. Plays a role in cell cycle by phosphorylating CDKN1B. Cooperates with TEC through reciprocal phosphorylation to mediate cytokine-driven activation of FOS transcription. In the nucleus, plays a key role in chromatin by specifically mediating phosphorylation of 'Tyr-41' of histone H3 (H3Y41ph), a specific tag that promotes exclusion of CBX5 (HP1 alpha) from chromatin. Up-regulates the potassium voltage-gated channel activity of KCNA3. In Mus musculus (Mouse), this protein is Tyrosine-protein kinase JAK2.